The chain runs to 471 residues: Abscisic acid 8'-hydroxylase 1 (471 aa).

A helical transmembrane segment spans residues methionine 1–arginine 21. Cysteine 415 contacts heme.

The protein belongs to the cytochrome P450 family. It depends on heme as a cofactor. In seedlings and expanding leaves.

It localises to the membrane. The catalysed reaction is 2-cis-(+)-abscisate + reduced [NADPH--hemoprotein reductase] + O2 = (+)-8'-hydroxyabscisate + oxidized [NADPH--hemoprotein reductase] + H2O + H(+). It functions in the pathway plant hormone degradation; abscisic acid degradation. Its function is as follows. Involved in the oxidative degradation of abscisic acid. The polypeptide is Abscisic acid 8'-hydroxylase 1 (CYP707A5) (Oryza sativa subsp. indica (Rice)).